We begin with the raw amino-acid sequence, 880 residues long: Pentatricopeptide repeat-containing protein At3g07290, mitochondrial (880 aa).

The N-terminal 89 residues, 1 to 89 (MLLIHIRSTR…RSDNDICVRF (89 aa)), are a transit peptide targeting the mitochondrion. PPR repeat units follow at residues 159 to 193 (NYPC…GFVV), 194 to 228 (GMID…GFVL), 229 to 259 (DSHI…MSKE), 265 to 299 (NSVS…GCQP), 300 to 334 (STRT…GCKP), 335 to 369 (NVHT…RIFP), 370 to 404 (SVIT…ACKP), 405 to 439 (NVRT…GLSP), 440 to 474 (DIVS…DIEP), 475 to 509 (DCLT…GISL), 510 to 544 (DEVT…RILT), 545 to 579 (TPHS…GLVP), 580 to 614 (SVVT…GCLP), 615 to 649 (NVYP…GVSP), 650 to 684 (NHVT…GYEL), 685 to 721 (NDRI…ETDP), 738 to 768 (ISGL…VLER), 772 to 806 (LEKA…GFVP), and 807 to 842 (SFKS…GVVE).

The protein belongs to the PPR family. P subfamily.

The protein resides in the mitochondrion. This chain is Pentatricopeptide repeat-containing protein At3g07290, mitochondrial, found in Arabidopsis thaliana (Mouse-ear cress).